The chain runs to 540 residues: MRFEALDTRRLTGFLAEYVNQPDQCSDLFSYRWKTNGWEQERSEDLAKRSFSHRQALCRLLEARHAPLRKREACMDNIHKLKQENALVVVAGQQAGLMTGPLYTAYKAMSVILLAKQYEATLNQPVVPLFWIAGEDHDLDEVRYVHYLKGDMWKKLMLGDEPNGEAASTKVLPKKELDTFLAKLFASLPETSYTNTLKAMVTQAAATAGTYTEFFKLLMHELFYREGLLFLDSNDPELRAIERPFFKQLIRKVDALQECQAAGEARFVEKGYPSPIATEKQNAHLFYTLDGKRRRLDYEAGRFYVRETERQFTKEELLAEVDSHPQRFSNNVVTRPLMQEWLLPTLAFVAGPGELAYWATLKDVFALFDYKLTPIIPRLSATFVPCRVEKHLRERKEAAETYILGEGEKLKEAWLASQHSYPVAQRAQAAAEAIEAAHLPFRELAGEISPTLKKMGEKNRAFIQGQIAFLKERMEREIREQHQVGLSKYDEAMTWLHPKDAPQERILHSFILLNTAGIDIFSRLLEKKPPHTGAHLVFYV.

The stretch at 457 to 477 forms a coiled coil; the sequence is EKNRAFIQGQIAFLKERMERE.

The protein belongs to the BshC family.

In terms of biological role, involved in bacillithiol (BSH) biosynthesis. May catalyze the last step of the pathway, the addition of cysteine to glucosamine malate (GlcN-Mal) to generate BSH. The polypeptide is Putative cysteine ligase BshC (Shouchella clausii (strain KSM-K16) (Alkalihalobacillus clausii)).